A 318-amino-acid polypeptide reads, in one-letter code: Oxygen-evolving enhancer protein 1, chloroplastic (318 aa).

The first 18 residues, 1–18 (MKAVIAVFITLMLTAVVA), serve as a signal peptide directing secretion. The chain crosses the membrane as a helical span at residues 45–65 (AAAAALAALTTLSVISPSFAI).

The protein belongs to the PsbO family.

The protein resides in the plastid. Its subcellular location is the chloroplast thylakoid membrane. Functionally, stabilizes the manganese cluster which is the primary site of water splitting. This is Oxygen-evolving enhancer protein 1, chloroplastic from Chattonella marina var. antiqua (Red tide flagellate).